The chain runs to 256 residues: Phosphatidylglycerol--prolipoprotein diacylglyceryl transferase (256 aa).

The next 3 membrane-spanning stretches (helical) occupy residues 19–39 (VHWYGLMYLIGFVSAWLLGYW), 56–76 (LIFYSALGVILGGRVGYMLFY), and 91–111 (IWEGGMSFHGGLLGVVIAAWL). Residue arginine 139 participates in a 1,2-diacyl-sn-glycero-3-phospho-(1'-sn-glycerol) binding. A helical transmembrane segment spans residues 231 to 251 (FGWLTMGQVLSIPMLLIGIWL).

It belongs to the Lgt family.

The protein localises to the cell inner membrane. The enzyme catalyses L-cysteinyl-[prolipoprotein] + a 1,2-diacyl-sn-glycero-3-phospho-(1'-sn-glycerol) = an S-1,2-diacyl-sn-glyceryl-L-cysteinyl-[prolipoprotein] + sn-glycerol 1-phosphate + H(+). It functions in the pathway protein modification; lipoprotein biosynthesis (diacylglyceryl transfer). Functionally, catalyzes the transfer of the diacylglyceryl group from phosphatidylglycerol to the sulfhydryl group of the N-terminal cysteine of a prolipoprotein, the first step in the formation of mature lipoproteins. The protein is Phosphatidylglycerol--prolipoprotein diacylglyceryl transferase of Legionella pneumophila (strain Lens).